The sequence spans 196 residues: MLDRIKACFTESIQTQIAAAEALPDAISRAAMTLVQSLLNGNKILCCGNGTSAANAQHFAASMINRFETERPSLPAIALNADNVVLTAITNDRLHDEVYAKQVRALGHAGDVLLAISTRGNSRDIVKAVEAAVTRDMTIVALTGYDGGELAGLLGQQDVEIRIPSHRSARIQEMHMLTVNCLCDLIDSTLFPHQDE.

One can recognise an SIS domain in the interval 34 to 196 (LVQSLLNGNK…DSTLFPHQDE (163 aa)).

The protein belongs to the SIS family. DiaA subfamily. As to quaternary structure, homotetramer; dimer of dimers.

Required for the timely initiation of chromosomal replication via direct interactions with the DnaA initiator protein. This chain is DnaA initiator-associating protein DiaA, found in Serratia proteamaculans (strain 568).